Here is a 497-residue protein sequence, read N- to C-terminus: Probable malate:quinone oxidoreductase (497 aa).

The protein belongs to the MQO family. FAD is required as a cofactor.

The catalysed reaction is (S)-malate + a quinone = a quinol + oxaloacetate. Its pathway is carbohydrate metabolism; tricarboxylic acid cycle; oxaloacetate from (S)-malate (quinone route): step 1/1. The protein is Probable malate:quinone oxidoreductase of Bacillus cereus (strain ATCC 14579 / DSM 31 / CCUG 7414 / JCM 2152 / NBRC 15305 / NCIMB 9373 / NCTC 2599 / NRRL B-3711).